We begin with the raw amino-acid sequence, 59 residues long: Aedesin (59 aa).

A signal peptide spans 1 to 23 (MNFTKLFAIVLLAALVLLGQTEA).

Belongs to the cecropin family. Salivary gland (at protein level).

It is found in the secreted. In terms of biological role, antimicrobial peptide. Exhibits antibacterial activity against Gram-negative bacteria, such as Escherichia coli, Pseudomonas aeruginosa, Acinetobacter baumannii and Klebsiella pneumoniae. Shows no antibacterial effects against Gram-positive bacteria, such as Staphylococcus aureus, Enterococcus faecalis and Enterococcus faecium. Exhibits antiviral activity against all four dengue virus serotypes and chikungunya virus. Exhibits leishmanicidal activity. Partially neutralizes lipopolysaccharides (LPS). Exhibits anti-inflammatory properties: inhibits LPS-induced iNOS/NOS2 transcription, nitric oxide (NO) and pro-inflammatory cytokine production in mouse macrophages and human peripheral blood mononuclear cells (PBMCs); inhibits LPS-induced activation of MAPK and NF-kappa-B signaling pathways in mouse macrophages. This Aedes aegypti (Yellowfever mosquito) protein is Aedesin.